Reading from the N-terminus, the 122-residue chain is Phosphoribosyl-ATP pyrophosphatase (122 aa).

It belongs to the PRA-PH family.

The protein resides in the cytoplasm. The enzyme catalyses 1-(5-phospho-beta-D-ribosyl)-ATP + H2O = 1-(5-phospho-beta-D-ribosyl)-5'-AMP + diphosphate + H(+). It participates in amino-acid biosynthesis; L-histidine biosynthesis; L-histidine from 5-phospho-alpha-D-ribose 1-diphosphate: step 2/9. This chain is Phosphoribosyl-ATP pyrophosphatase, found in Burkholderia thailandensis (strain ATCC 700388 / DSM 13276 / CCUG 48851 / CIP 106301 / E264).